We begin with the raw amino-acid sequence, 616 residues long: Chaperone protein HscA (616 aa).

This sequence belongs to the heat shock protein 70 family.

In terms of biological role, chaperone involved in the maturation of iron-sulfur cluster-containing proteins. Has a low intrinsic ATPase activity which is markedly stimulated by HscB. Involved in the maturation of IscU. The sequence is that of Chaperone protein HscA from Proteus mirabilis (strain HI4320).